Here is a 94-residue protein sequence, read N- to C-terminus: Trp operon repressor homolog (94 aa).

The DNA-binding element occupies 58-81 (QREIAEKYGVSIAQITRGSNALKG).

The protein belongs to the TrpR family. As to quaternary structure, homodimer.

It localises to the cytoplasm. Functionally, this protein is an aporepressor. When complexed with L-tryptophan it binds the operator region of the trp operon and prevents the initiation of transcription. The protein is Trp operon repressor homolog of Chlamydia trachomatis serovar A (strain ATCC VR-571B / DSM 19440 / HAR-13).